The primary structure comprises 299 residues: ATP phosphoribosyltransferase (299 aa).

Belongs to the ATP phosphoribosyltransferase family. Long subfamily. It depends on Mg(2+) as a cofactor.

Its subcellular location is the cytoplasm. It carries out the reaction 1-(5-phospho-beta-D-ribosyl)-ATP + diphosphate = 5-phospho-alpha-D-ribose 1-diphosphate + ATP. The protein operates within amino-acid biosynthesis; L-histidine biosynthesis; L-histidine from 5-phospho-alpha-D-ribose 1-diphosphate: step 1/9. Its activity is regulated as follows. Feedback inhibited by histidine. Its function is as follows. Catalyzes the condensation of ATP and 5-phosphoribose 1-diphosphate to form N'-(5'-phosphoribosyl)-ATP (PR-ATP). Has a crucial role in the pathway because the rate of histidine biosynthesis seems to be controlled primarily by regulation of HisG enzymatic activity. This chain is ATP phosphoribosyltransferase, found in Shewanella woodyi (strain ATCC 51908 / MS32).